A 322-amino-acid polypeptide reads, in one-letter code: MKKEDLRIVYMGTPDFAVEALRQLVEGGYNVVGVITMPDKPAGRGHKIQYSPVKQYALEQNLPLLQPEKLKDEAFVQALREWKADLQIVVAFRMLPEVVWNMPRLGTFNLHASLLPQYRGAAPINWAVINGDTETGITTFFLQHEIDTGKVIQQVRVPIADTDNVEVVHDKLMILGGKLVLETVDAILNDTVKPIAQEDMAVVGELRPAPKIFKETCRIDWNSPVKKVYDFIRGLSPYPAAWSELVSPEGEAVVMKIFESEKIYEAHQLPVGTVVTDGKKYIKVAVPDGFVSVLSLQLPGKKRLKTDELLRGFRLSDGYKMN.

Serine 113–proline 116 is a binding site for (6S)-5,6,7,8-tetrahydrofolate.

The protein belongs to the Fmt family.

It catalyses the reaction L-methionyl-tRNA(fMet) + (6R)-10-formyltetrahydrofolate = N-formyl-L-methionyl-tRNA(fMet) + (6S)-5,6,7,8-tetrahydrofolate + H(+). Functionally, attaches a formyl group to the free amino group of methionyl-tRNA(fMet). The formyl group appears to play a dual role in the initiator identity of N-formylmethionyl-tRNA by promoting its recognition by IF2 and preventing the misappropriation of this tRNA by the elongation apparatus. The polypeptide is Methionyl-tRNA formyltransferase (Bacteroides thetaiotaomicron (strain ATCC 29148 / DSM 2079 / JCM 5827 / CCUG 10774 / NCTC 10582 / VPI-5482 / E50)).